The chain runs to 328 residues: H-2 class I histocompatibility antigen, K-Q alpha chain (328 aa).

The alpha-1 stretch occupies residues 1-71 (PRFISVGYVD…LLRYYNQSAG (71 aa)). Over 1 to 265 (PRFISVGYVD…EPPPSAVSNT (265 aa)) the chain is Extracellular. N67 carries an N-linked (GlcNAc...) asparagine glycan. Residues 72 to 163 (GSHTIQRMYG…KNGNATLLRT (92 aa)) are alpha-2. A disulfide bridge connects residues C82 and C145. N157 is a glycosylation site (N-linked (GlcNAc...) asparagine). Residues 164 to 255 (DSPKAHVTHH…GLPKPLTLRW (92 aa)) form an alpha-3 region. Positions 166-252 (PKAHVTHHSR…YHQGLPKPLT (87 aa)) constitute an Ig-like C1-type domain. C184 and C240 form a disulfide bridge. Residues 256–265 (EPPPSAVSNT) form a connecting peptide region. Residues 266–289 (VIIAVLVVLGAAIVTGAVVAFVMM) form a helical membrane-spanning segment. Residues 290–328 (RRRNTGGKGGDYALAPGSQTSDLSLPDCKVMVHDPHSLA) are Cytoplasmic-facing. Phosphoserine is present on residues S310 and S313.

The protein belongs to the MHC class I family. As to quaternary structure, heterodimer of an alpha chain and a beta chain (beta-2-microglobulin).

The protein resides in the membrane. Its function is as follows. Involved in the presentation of foreign antigens to the immune system. In Mus musculus (Mouse), this protein is H-2 class I histocompatibility antigen, K-Q alpha chain (H2-K1).